A 290-amino-acid chain; its full sequence is Ribosomal RNA small subunit methyltransferase A (290 aa).

The S-adenosyl-L-methionine site is built by Asn-27, Leu-29, Gly-54, Glu-75, Asp-100, and Asn-125.

This sequence belongs to the class I-like SAM-binding methyltransferase superfamily. rRNA adenine N(6)-methyltransferase family. RsmA subfamily.

It localises to the cytoplasm. It catalyses the reaction adenosine(1518)/adenosine(1519) in 16S rRNA + 4 S-adenosyl-L-methionine = N(6)-dimethyladenosine(1518)/N(6)-dimethyladenosine(1519) in 16S rRNA + 4 S-adenosyl-L-homocysteine + 4 H(+). Functionally, specifically dimethylates two adjacent adenosines (A1518 and A1519) in the loop of a conserved hairpin near the 3'-end of 16S rRNA in the 30S particle. May play a critical role in biogenesis of 30S subunits. This is Ribosomal RNA small subunit methyltransferase A from Streptococcus equi subsp. zooepidemicus (strain H70).